Reading from the N-terminus, the 352-residue chain is NAD(P)H pyrophosphatase NUDT13, mitochondrial (352 aa).

Residues 1–20 (MSLYCGIACRRKFFWCYRLL) constitute a mitochondrion transit peptide. A Nudix hydrolase domain is found at 196–323 (PQMAPVAITL…PYTQQQNGTF (128 aa)). The Nudix box signature appears at 216-240 (RQSSFPKGMYSALAGFCDIGESVEE).

Belongs to the Nudix hydrolase family. Requires Mg(2+) as cofactor. Mn(2+) serves as cofactor. Highly expressed in metastasis-suppressed chromosome 6 melanoma hybrids.

It is found in the mitochondrion. It catalyses the reaction NADH + H2O = reduced beta-nicotinamide D-ribonucleotide + AMP + 2 H(+). The catalysed reaction is NAD(+) + H2O = beta-nicotinamide D-ribonucleotide + AMP + 2 H(+). It carries out the reaction NADPH + H2O = reduced beta-nicotinamide D-ribonucleotide + adenosine 2',5'-bisphosphate + 2 H(+). Functionally, NAD(P)H pyrophosphatase that hydrolyzes NADH into NMNH and AMP, and NADPH into NMNH and 2',5'-ADP. Has a marked preference for the reduced pyridine nucleotides. Does not show activity toward NAD-capped RNAs; the NAD-cap is an atypical cap present at the 5'-end of some RNAs. This Homo sapiens (Human) protein is NAD(P)H pyrophosphatase NUDT13, mitochondrial.